The primary structure comprises 361 residues: Probable S-adenosylmethionine-dependent methyltransferase At5g38780 (361 aa).

Residues tyrosine 19, cysteine 64, asparagine 69, aspartate 106, leucine 107, serine 135, and phenylalanine 136 each coordinate S-adenosyl-L-homocysteine. Residues asparagine 174, glutamate 260, phenylalanine 262, and asparagine 263 each coordinate Mg(2+).

This sequence belongs to the methyltransferase superfamily. Type-7 methyltransferase family. In terms of assembly, homodimer. Mg(2+) is required as a cofactor.

The polypeptide is Probable S-adenosylmethionine-dependent methyltransferase At5g38780 (Arabidopsis thaliana (Mouse-ear cress)).